The chain runs to 332 residues: Decaprenyl-phosphate phosphoribosyltransferase (332 aa).

Over residues 1-12 the composition is skewed to basic and acidic residues; sequence MSEHAAEHHRDT. The disordered stretch occupies residues 1 to 36; that stretch reads MSEHAAEHHRDTQNFLTSEPHTTAIEDNKKRQPPKN. Transmembrane regions (helical) follow at residues 50–70 and 74–94; these read WVKN…AIFN and IIDV…IYLV. 2 residues coordinate 5-phospho-alpha-D-ribose 1-diphosphate: Lys52 and Tyr92. Mg(2+) is bound by residues Asn95 and Asp99. Lys109 is a 5-phospho-alpha-D-ribose 1-diphosphate binding site. 2 helical membrane-spanning segments follow: residues 114–134 and 146–166; these read IAAG…LIAL and VALA…CFGW. Lys167 and Arg184 together coordinate 5-phospho-alpha-D-ribose 1-diphosphate. The next 2 helical transmembrane spans lie at 169–189 and 190–210; these read MPVI…MAGG and VAAG…GSLF. Lys215 lines the trans,octa-cis-decaprenyl phosphate pocket. A run of 3 helical transmembrane segments spans residues 244–264, 273–293, and 310–330; these read FVWT…GFDL, PWYQ…AAGV, and VLQV…YIMP.

This sequence belongs to the UbiA prenyltransferase family. DPPR synthase subfamily. Mg(2+) serves as cofactor.

It is found in the cell inner membrane. The enzyme catalyses trans,octa-cis-decaprenyl phosphate + 5-phospho-alpha-D-ribose 1-diphosphate + H(+) = trans,octa-cis-decaprenylphospho-beta-D-ribofuranose 5-phosphate + diphosphate. The protein operates within cell wall biogenesis; cell wall polysaccharide biosynthesis. Its function is as follows. Involved in the biosynthesis of decaprenylphosphoryl arabinose (DPA) a precursor for arabinan synthesis in mycobacterial cell wall biosynthesis. Catalyzes the transfer of a 5-phosphoribosyl residue from phosphoribose diphosphate (PRPP) to decaprenyl phosphate (DP) to form decaprenylphosphoryl-5-phosphoribose (DPPR). The protein is Decaprenyl-phosphate phosphoribosyltransferase of Corynebacterium glutamicum (strain ATCC 13032 / DSM 20300 / JCM 1318 / BCRC 11384 / CCUG 27702 / LMG 3730 / NBRC 12168 / NCIMB 10025 / NRRL B-2784 / 534).